The primary structure comprises 358 residues: tRNA-specific 2-thiouridylase MnmA (358 aa).

Residues 6-13 (AMSGGVDS) and leucine 32 contribute to the ATP site. Cysteine 101 (nucleophile) is an active-site residue. Cysteine 101 and cysteine 193 form a disulfide bridge. Glycine 125 lines the ATP pocket. An interaction with tRNA region spans residues 143-145 (KDQ). Cysteine 193 acts as the Cysteine persulfide intermediate in catalysis.

The protein belongs to the MnmA/TRMU family.

It is found in the cytoplasm. The enzyme catalyses S-sulfanyl-L-cysteinyl-[protein] + uridine(34) in tRNA + AH2 + ATP = 2-thiouridine(34) in tRNA + L-cysteinyl-[protein] + A + AMP + diphosphate + H(+). Functionally, catalyzes the 2-thiolation of uridine at the wobble position (U34) of tRNA, leading to the formation of s(2)U34. The protein is tRNA-specific 2-thiouridylase MnmA of Mycobacterium leprae (strain Br4923).